A 279-amino-acid chain; its full sequence is Pantothenate synthetase (279 aa).

26 to 33 is a binding site for ATP; that stretch reads MGNLHDGH. Catalysis depends on histidine 33, which acts as the Proton donor. A (R)-pantoate-binding site is contributed by glutamine 57. Glutamine 57 serves as a coordination point for beta-alanine. 144–147 serves as a coordination point for ATP; that stretch reads GKKD. Residue glutamine 150 participates in (R)-pantoate binding. Residues valine 173 and 181–184 each bind ATP; that span reads LSSR.

This sequence belongs to the pantothenate synthetase family. In terms of assembly, homodimer.

The protein resides in the cytoplasm. It carries out the reaction (R)-pantoate + beta-alanine + ATP = (R)-pantothenate + AMP + diphosphate + H(+). The protein operates within cofactor biosynthesis; (R)-pantothenate biosynthesis; (R)-pantothenate from (R)-pantoate and beta-alanine: step 1/1. In terms of biological role, catalyzes the condensation of pantoate with beta-alanine in an ATP-dependent reaction via a pantoyl-adenylate intermediate. The polypeptide is Pantothenate synthetase (Burkholderia mallei (strain NCTC 10229)).